A 39-amino-acid chain; its full sequence is Photosystem II reaction center protein L (39 aa).

The chain crosses the membrane as a helical span at residues isoleucine 18–phenylalanine 38.

It belongs to the PsbL family. As to quaternary structure, PSII is composed of 1 copy each of membrane proteins PsbA, PsbB, PsbC, PsbD, PsbE, PsbF, PsbH, PsbI, PsbJ, PsbK, PsbL, PsbM, PsbT, PsbX, PsbY, PsbZ, Psb30/Ycf12, at least 3 peripheral proteins of the oxygen-evolving complex and a large number of cofactors. It forms dimeric complexes.

The protein localises to the plastid membrane. Functionally, one of the components of the core complex of photosystem II (PSII). PSII is a light-driven water:plastoquinone oxidoreductase that uses light energy to abstract electrons from H(2)O, generating O(2) and a proton gradient subsequently used for ATP formation. It consists of a core antenna complex that captures photons, and an electron transfer chain that converts photonic excitation into a charge separation. This subunit is found at the monomer-monomer interface and is required for correct PSII assembly and/or dimerization. The sequence is that of Photosystem II reaction center protein L from Cuscuta pentagona (Five-angled dodder).